We begin with the raw amino-acid sequence, 150 residues long: D-aminoacyl-tRNA deacylase (150 aa).

The Gly-cisPro motif, important for rejection of L-amino acids motif lies at 138–139; that stretch reads GP.

Belongs to the DTD family. In terms of assembly, homodimer.

Its subcellular location is the cytoplasm. The enzyme catalyses glycyl-tRNA(Ala) + H2O = tRNA(Ala) + glycine + H(+). It catalyses the reaction a D-aminoacyl-tRNA + H2O = a tRNA + a D-alpha-amino acid + H(+). Functionally, an aminoacyl-tRNA editing enzyme that deacylates mischarged D-aminoacyl-tRNAs. Also deacylates mischarged glycyl-tRNA(Ala), protecting cells against glycine mischarging by AlaRS. Acts via tRNA-based rather than protein-based catalysis; rejects L-amino acids rather than detecting D-amino acids in the active site. By recycling D-aminoacyl-tRNA to D-amino acids and free tRNA molecules, this enzyme counteracts the toxicity associated with the formation of D-aminoacyl-tRNA entities in vivo and helps enforce protein L-homochirality. The sequence is that of D-aminoacyl-tRNA deacylase from Chlorobium phaeobacteroides (strain DSM 266 / SMG 266 / 2430).